Consider the following 365-residue polypeptide: 3-dehydroquinate synthase (365 aa).

NAD(+) is bound by residues 107-111, 131-132, K144, and K153; these read GVIGD and TS. Positions 186, 251, and 268 each coordinate Zn(2+).

This sequence belongs to the sugar phosphate cyclases superfamily. Dehydroquinate synthase family. The cofactor is Co(2+). It depends on Zn(2+) as a cofactor. NAD(+) is required as a cofactor.

The protein resides in the cytoplasm. It catalyses the reaction 7-phospho-2-dehydro-3-deoxy-D-arabino-heptonate = 3-dehydroquinate + phosphate. It participates in metabolic intermediate biosynthesis; chorismate biosynthesis; chorismate from D-erythrose 4-phosphate and phosphoenolpyruvate: step 2/7. In terms of biological role, catalyzes the conversion of 3-deoxy-D-arabino-heptulosonate 7-phosphate (DAHP) to dehydroquinate (DHQ). This Crocosphaera subtropica (strain ATCC 51142 / BH68) (Cyanothece sp. (strain ATCC 51142)) protein is 3-dehydroquinate synthase.